The following is a 172-amino-acid chain: Adenine phosphoribosyltransferase (172 aa).

The protein belongs to the purine/pyrimidine phosphoribosyltransferase family. In terms of assembly, homodimer.

Its subcellular location is the cytoplasm. It carries out the reaction AMP + diphosphate = 5-phospho-alpha-D-ribose 1-diphosphate + adenine. The protein operates within purine metabolism; AMP biosynthesis via salvage pathway; AMP from adenine: step 1/1. Its function is as follows. Catalyzes a salvage reaction resulting in the formation of AMP, that is energically less costly than de novo synthesis. The polypeptide is Adenine phosphoribosyltransferase (Clostridium perfringens (strain ATCC 13124 / DSM 756 / JCM 1290 / NCIMB 6125 / NCTC 8237 / Type A)).